The primary structure comprises 671 residues: DNA ligase (671 aa).

NAD(+)-binding positions include 34-38, 83-84, and Glu113; these read DSEYD and SL. Catalysis depends on Lys115, which acts as the N6-AMP-lysine intermediate. NAD(+) is bound by residues Arg136, Glu170, Lys286, and Lys310. Zn(2+) contacts are provided by Cys404, Cys407, Cys422, and Cys427. The BRCT domain maps to 590-671; it reads EEAGVFAGKT…FTQAVEQSEQ (82 aa).

It belongs to the NAD-dependent DNA ligase family. LigA subfamily. Mg(2+) serves as cofactor. It depends on Mn(2+) as a cofactor.

The catalysed reaction is NAD(+) + (deoxyribonucleotide)n-3'-hydroxyl + 5'-phospho-(deoxyribonucleotide)m = (deoxyribonucleotide)n+m + AMP + beta-nicotinamide D-nucleotide.. DNA ligase that catalyzes the formation of phosphodiester linkages between 5'-phosphoryl and 3'-hydroxyl groups in double-stranded DNA using NAD as a coenzyme and as the energy source for the reaction. It is essential for DNA replication and repair of damaged DNA. The polypeptide is DNA ligase (Shouchella clausii (strain KSM-K16) (Alkalihalobacillus clausii)).